The chain runs to 80 residues: Sulfur carrier protein TusA (80 aa).

Residue C17 is the Cysteine persulfide intermediate of the active site.

The protein belongs to the sulfur carrier protein TusA family.

It is found in the cytoplasm. Its function is as follows. Sulfur carrier protein which probably makes part of a sulfur-relay system. This is Sulfur carrier protein TusA from Pseudomonas entomophila (strain L48).